The chain runs to 259 residues: MPRVSIVEKSQLFLKAIVEGVPPSLVNSLRRVIISELPVMAIDTVVVVNNTSVMYDEFLAQRLGLIPLTTPLHSLPTYEECATGVADPTECGTRLVLQVTADGDVTVYSGDLTSERPDVVPVYKDIPIVKLVKGQSIVIEAYAKLGIAKDHAKWQAATASYYYYPKVIIKDEKCREICKEICPDLEDPVKCTFNKAWTCKDLCKGGLDVEWEKNKYVFWVESFGNYGVDVALKEAFRILKRKFEAFTEELVKKASSGER.

Belongs to the archaeal Rpo3/eukaryotic RPB3 RNA polymerase subunit family. In terms of assembly, part of the RNA polymerase complex.

It is found in the cytoplasm. The enzyme catalyses RNA(n) + a ribonucleoside 5'-triphosphate = RNA(n+1) + diphosphate. DNA-dependent RNA polymerase (RNAP) catalyzes the transcription of DNA into RNA using the four ribonucleoside triphosphates as substrates. In Pyrobaculum arsenaticum (strain DSM 13514 / JCM 11321 / PZ6), this protein is DNA-directed RNA polymerase subunit Rpo3.